The chain runs to 349 residues: Protein RecA (349 aa).

65 to 72 serves as a coordination point for ATP; sequence GPESSGKT. The segment at 329 to 349 is disordered; that stretch reads FDGDVDENENEDDSPKTLFDE. The segment covering 331–340 has biased composition (acidic residues); sequence GDVDENENED.

This sequence belongs to the RecA family.

Its subcellular location is the cytoplasm. Functionally, can catalyze the hydrolysis of ATP in the presence of single-stranded DNA, the ATP-dependent uptake of single-stranded DNA by duplex DNA, and the ATP-dependent hybridization of homologous single-stranded DNAs. It interacts with LexA causing its activation and leading to its autocatalytic cleavage. This is Protein RecA from Staphylococcus epidermidis (strain ATCC 35984 / DSM 28319 / BCRC 17069 / CCUG 31568 / BM 3577 / RP62A).